The sequence spans 354 residues: UDP-3-O-acylglucosamine N-acyltransferase (354 aa).

His245 functions as the Proton acceptor in the catalytic mechanism.

The protein belongs to the transferase hexapeptide repeat family. LpxD subfamily. In terms of assembly, homotrimer.

It carries out the reaction a UDP-3-O-[(3R)-3-hydroxyacyl]-alpha-D-glucosamine + a (3R)-hydroxyacyl-[ACP] = a UDP-2-N,3-O-bis[(3R)-3-hydroxyacyl]-alpha-D-glucosamine + holo-[ACP] + H(+). It functions in the pathway bacterial outer membrane biogenesis; LPS lipid A biosynthesis. Its function is as follows. Catalyzes the N-acylation of UDP-3-O-acylglucosamine using 3-hydroxyacyl-ACP as the acyl donor. Is involved in the biosynthesis of lipid A, a phosphorylated glycolipid that anchors the lipopolysaccharide to the outer membrane of the cell. The protein is UDP-3-O-acylglucosamine N-acyltransferase of Anaeromyxobacter dehalogenans (strain 2CP-1 / ATCC BAA-258).